A 67-amino-acid polypeptide reads, in one-letter code: Large ribosomal subunit protein bL32c (67 aa).

Belongs to the bacterial ribosomal protein bL32 family.

Its subcellular location is the plastid. It localises to the chloroplast. The polypeptide is Large ribosomal subunit protein bL32c (Chara vulgaris (Common stonewort)).